The primary structure comprises 505 residues: Phase 1 flagellin (505 aa).

The protein belongs to the bacterial flagellin family.

It is found in the secreted. It localises to the bacterial flagellum. Flagellin is the subunit protein which polymerizes to form the filaments of bacterial flagella. This Salmonella naestved protein is Phase 1 flagellin (fliC).